Consider the following 343-residue polypeptide: NADH-ubiquinone oxidoreductase chain 2 (343 aa).

8 helical membrane-spanning segments follow: residues 1 to 21, 59 to 81, 96 to 116, 150 to 170, 178 to 198, 200 to 220, 241 to 261, and 270 to 290; these read MNPM…TMIT, YYLI…ALNT, TIIT…SWLP, NITL…LGSL, LMAF…TMAP, ISTL…LLIN, MTIL…SGFM, and LISM…LLSL.

Belongs to the complex I subunit 2 family.

Its subcellular location is the mitochondrion inner membrane. It catalyses the reaction a ubiquinone + NADH + 5 H(+)(in) = a ubiquinol + NAD(+) + 4 H(+)(out). In terms of biological role, core subunit of the mitochondrial membrane respiratory chain NADH dehydrogenase (Complex I) that is believed to belong to the minimal assembly required for catalysis. Complex I functions in the transfer of electrons from NADH to the respiratory chain. The immediate electron acceptor for the enzyme is believed to be ubiquinone. This chain is NADH-ubiquinone oxidoreductase chain 2 (MT-ND2), found in Lycodon semicarinatus (Ryukyu odd-tooth snake).